The chain runs to 492 residues: Serine/threonine-protein kinase 3 (492 aa).

One can recognise a Protein kinase domain in the interval 26–277; it reads FDVLEKLGEG…ATQLLQHPFI (252 aa). ATP is bound by residues 32–40 and Lys55; that span reads LGEGSYGSV. Asp145 serves as the catalytic Proton acceptor. Thr179 bears the Phosphothreonine; by autocatalysis mark. Coiled coils occupy residues 286–328 and 443–476; these read LRDL…TMVK and NLDF…AKRQ. The segment covering 297–307 has biased composition (basic and acidic residues); the sequence is KAKRQQEQQRE. Residues 297 to 339 form a disordered region; sequence KAKRQQEQQRELEEDDENSEEEVEVDSHTMVKSGSESAGTMRA. Residues 308–320 are compositionally biased toward acidic residues; it reads LEEDDENSEEEVE. Over residues 326 to 339 the composition is skewed to polar residues; the sequence is MVKSGSESAGTMRA. In terms of domain architecture, SARAH spans 438–485; sequence FDFLKNLDFEELQMRLTALDPMMEREIEELRQRYTAKRQPILDAMDAK.

It belongs to the protein kinase superfamily. STE Ser/Thr protein kinase family. STE20 subfamily. As to quaternary structure, homodimer; mediated via the coiled-coil region. Requires Mg(2+) as cofactor.

Its subcellular location is the cytoplasm. It localises to the nucleus. The enzyme catalyses L-seryl-[protein] + ATP = O-phospho-L-seryl-[protein] + ADP + H(+). It carries out the reaction L-threonyl-[protein] + ATP = O-phospho-L-threonyl-[protein] + ADP + H(+). Its activity is regulated as follows. Inhibited by the C-terminal non-catalytic region. Activated by caspase-cleavage. Full activation also requires homodimerization and autophosphorylation of Thr-179. Its function is as follows. Stress-activated, pro-apoptotic kinase which, following caspase-cleavage, enters the nucleus and induces chromatin condensation followed by internucleosomal DNA fragmentation. Key component of the Hippo signaling pathway which plays a pivotal role in organ size control and tumor suppression by restricting proliferation and promoting apoptosis. The core of this pathway is composed of a kinase cascade wherein stk3/mst2 and stk4/mst1, in complex with its regulatory protein sav1, phosphorylates and activates lats1/2 in complex with its regulatory protein mob1, which in turn phosphorylates and inactivates yap1 oncoprotein and wwtr1/taz. Phosphorylation of yap1 by lats2 inhibits its translocation into the nucleus to regulate cellular genes important for cell proliferation, cell death, and cell migration. The chain is Serine/threonine-protein kinase 3 (stk3) from Danio rerio (Zebrafish).